The chain runs to 554 residues: Hydroxylamine reductase (554 aa).

[2Fe-2S] cluster-binding residues include Cys3, Cys6, Cys18, and Cys25. Hybrid [4Fe-2O-2S] cluster contacts are provided by His252, Glu276, Cys320, Cys408, Cys436, Cys461, Glu495, and Lys497. Cys408 bears the Cysteine persulfide mark.

The protein belongs to the HCP family. [2Fe-2S] cluster is required as a cofactor. Requires hybrid [4Fe-2O-2S] cluster as cofactor.

It localises to the cytoplasm. The enzyme catalyses A + NH4(+) + H2O = hydroxylamine + AH2 + H(+). In terms of biological role, catalyzes the reduction of hydroxylamine to form NH(3) and H(2)O. The protein is Hydroxylamine reductase of Shewanella baltica (strain OS155 / ATCC BAA-1091).